The following is a 926-amino-acid chain: Peripheral plasma membrane protein CASK (926 aa).

The Protein kinase domain occupies 12–276 (YELCEVIGKG…VYEALNHPWL (265 aa)). ATP contacts are provided by residues 18–26 (IGKGPFSVV) and K41. Phosphoserine is present on S51. Residue D141 is part of the active site. Phosphoserine; by autocatalysis is present on residues S151 and S155. T182 carries the post-translational modification Phosphothreonine. The calmodulin-binding stretch occupies residues 305–315 (KGAVLAAVSSH). S313 carries the phosphoserine modification. 2 consecutive L27 domains span residues 343 to 398 (AERA…SPQI) and 402 to 455 (PSDA…YSDE). The segment at 482-909 (MENVTRVRLV…DETIRHLEEA (428 aa)) is required for interaction with NRXN1 (via C-terminal tail). The PDZ domain maps to 490 to 571 (LVQFQKNTDE…SITFKIVPSY (82 aa)). Phosphoserine is present on residues S570 and Y571. The tract at residues 574 to 610 (QSSSCERDSPSTSRQSPANGHSSTNNSVSDLPSTTQP) is disordered. One can recognise an SH3 domain in the interval 612–682 (GRQIYVRAQF…PSPELQEWRV (71 aa)). Positions 739-911 (RKTLVLLGAH…TIRHLEEAVE (173 aa)) constitute a Guanylate kinase-like domain.

The protein in the N-terminal section; belongs to the protein kinase superfamily. CAMK Ser/Thr protein kinase family. CaMK subfamily. This sequence belongs to the MAGUK family. As to quaternary structure, CASK and LIN7 form a tripartite complex with CASKIN1. Component of the brain-specific heterotrimeric complex (LIN-10-LIN-2-LIN-7 complex) composed of at least APBA1, CASK, and LIN7, which associates with the motor protein KIF17 to transport vesicles along microtubules. Forms a heterotrimeric complex with DLG1 and LIN7B via their L27 domains. Identified in a complex with ACTN4, IQGAP1, MAGI2, NPHS1, SPTAN1 and SPTBN1. Part of a complex containing CASK, TBR1 and TSPYL2. Interacts with WHRN. Interacts (via the PDZ, SH3 and guanylate kinase-like domains) with NRXN1 (via C-terminus). Interacts with CASKIN1, APBA1, LIN7(A/B/C), and L27 domain of DLG1 and isoform 2 of DLG4. Interacts with FCHSD2. Interacts with KIRREL3. Interacts with TBR1. Interacts with TSPYL2. Unlike other protein kinases, does not require a divalent cation such as magnesium for catalytic activity. serves as cofactor.

Its subcellular location is the nucleus. It localises to the cytoplasm. It is found in the cell membrane. It catalyses the reaction L-seryl-[protein] + ATP = O-phospho-L-seryl-[protein] + ADP + H(+). It carries out the reaction L-threonyl-[protein] + ATP = O-phospho-L-threonyl-[protein] + ADP + H(+). Its activity is regulated as follows. Differs from archetypal CaMK members in that the kinase domain exhibits a constitutively active conformation and the autoinhibitory region does not engage in direct contact with the ATP-binding cleft, although it still binds Ca(2+)/CAM. Functionally, multidomain scaffolding Mg(2+)-independent protein kinase that catalyzes the phosphotransfer from ATP to proteins such as NRXN1, and plays a role in synaptic transmembrane protein anchoring and ion channel trafficking. Contributes to neural development and regulation of gene expression via interaction with the transcription factor TBR1. Binds to cell-surface proteins, including amyloid precursor protein, neurexins, and syndecans. May mediate a link between the extracellular matrix and the actin cytoskeleton via its interaction with syndecan and with the actin/spectrin-binding protein 4.1. Component of the LIN-10-LIN-2-LIN-7 complex, which associates with the motor protein KIF17 to transport vesicles containing N-methyl-D-aspartate (NMDA) receptor subunit NR2B along microtubules. This is Peripheral plasma membrane protein CASK from Mus musculus (Mouse).